The chain runs to 351 residues: UDP-3-O-acylglucosamine N-acyltransferase (351 aa).

The active-site Proton acceptor is His240.

Belongs to the transferase hexapeptide repeat family. LpxD subfamily. As to quaternary structure, homotrimer.

The enzyme catalyses a UDP-3-O-[(3R)-3-hydroxyacyl]-alpha-D-glucosamine + a (3R)-hydroxyacyl-[ACP] = a UDP-2-N,3-O-bis[(3R)-3-hydroxyacyl]-alpha-D-glucosamine + holo-[ACP] + H(+). It functions in the pathway bacterial outer membrane biogenesis; LPS lipid A biosynthesis. Functionally, catalyzes the N-acylation of UDP-3-O-acylglucosamine using 3-hydroxyacyl-ACP as the acyl donor. Is involved in the biosynthesis of lipid A, a phosphorylated glycolipid that anchors the lipopolysaccharide to the outer membrane of the cell. In Ectopseudomonas mendocina (strain ymp) (Pseudomonas mendocina), this protein is UDP-3-O-acylglucosamine N-acyltransferase.